The following is a 260-amino-acid chain: Cell wall synthesis protein Wag31 (260 aa).

Positions 31–64 (FLDLVENELTRLIEENSDLRQRINELDQELAAGG) form a coiled coil. A Phosphothreonine modification is found at Thr73. Positions 161 to 196 (MLADAQSRSEAQLRQAQEKADALQADAERKHSEIMG) form a coiled coil. Residues 233–260 (ELGQRGSAAPVDSNADAGGFDQFNRGKN) are disordered.

The protein belongs to the DivIVA family. As to quaternary structure, forms homooligomers. Post-translationally, phosphorylated by PknA. Phosphorylation enhances polar localization, which in turn heightens polar peptidoglycan biosynthesis.

The protein resides in the cytoplasm. In terms of biological role, important for maintaining cell shape and cell wall integrity by localizing peptidoglycan synthesis to the cell poles. In Mycobacterium tuberculosis (strain CDC 1551 / Oshkosh), this protein is Cell wall synthesis protein Wag31 (wag31).